The primary structure comprises 130 residues: Flagellar assembly factor FliW (130 aa).

This sequence belongs to the FliW family. As to quaternary structure, interacts with translational regulator CsrA and flagellin(s).

It localises to the cytoplasm. Functionally, acts as an anti-CsrA protein, binds CsrA and prevents it from repressing translation of its target genes, one of which is flagellin. Binds to flagellin and participates in the assembly of the flagellum. This chain is Flagellar assembly factor FliW, found in Borrelia turicatae (strain 91E135).